The following is a 344-amino-acid chain: Flavonoid 7-O-methyltransferase 1A (344 aa).

Residue Asp211 coordinates S-adenosyl-L-methionine. The active-site Proton acceptor is His249.

This sequence belongs to the class I-like SAM-binding methyltransferase superfamily. Cation-independent O-methyltransferase family. Homodimer.

The enzyme catalyses apigenin + S-adenosyl-L-methionine = genkwanin + S-adenosyl-L-homocysteine + H(+). It carries out the reaction luteolin + S-adenosyl-L-methionine = luteolin 7-methyl ether + S-adenosyl-L-homocysteine + H(+). The catalysed reaction is quercetin + S-adenosyl-L-methionine = rhamnetin + S-adenosyl-L-homocysteine + H(+). It catalyses the reaction (2S)-naringenin + S-adenosyl-L-methionine = (2S)-sakuranetin + S-adenosyl-L-homocysteine + H(+). The enzyme catalyses kaempferol + S-adenosyl-L-methionine = kaempferol 7-methyl ether + S-adenosyl-L-homocysteine + H(+). It carries out the reaction isorhamnetin + S-adenosyl-L-methionine = rhamnacene + S-adenosyl-L-homocysteine + H(+). The catalysed reaction is 4',7,8-trihydroxyflavone + S-adenosyl-L-methionine = 4',8-dihydroxy-7-methoxyflavone + S-adenosyl-L-homocysteine. It catalyses the reaction scutellarein + S-adenosyl-L-methionine = scutellarein 7-methyl ether + S-adenosyl-L-homocysteine. It functions in the pathway flavonoid metabolism. Its function is as follows. Flavonoid 7-O-methyltransferase involved in the biosynthesis of polymethoxylated flavonoids natural products such as pebrellin, aroma compounds which contribute to the flavor of peppermint, and exhibit pharmacological activities such as anti-allergic, anti-oxidant, antibacterial, anti-proliferative, and anti-inflammatory effects. Catalyzes S-adenosylmethionine-dependent regioselective 7-O-methylation of flavonoids; active on various hydroxylated flavonoid substrates, including luteolin (LUT), quercetin, kaempferol, isorhamnetin, apigenin (API), scutellarein (6-hydroxy-apigenin, 6-OH-API, SCU), 7,8,4'-trihydroxy-flavone and naringenin (NAR), and, with a lower efficiency, 7,8,3',4'-tetrahydroxy-flavone, taxifolin, hesperetin and genistein. The polypeptide is Flavonoid 7-O-methyltransferase 1A (Mentha piperita (Peppermint)).